A 292-amino-acid chain; its full sequence is Ribosomal protein L11 methyltransferase (292 aa).

Thr144, Gly165, Asp187, and Asn229 together coordinate S-adenosyl-L-methionine.

Belongs to the methyltransferase superfamily. PrmA family.

The protein resides in the cytoplasm. The catalysed reaction is L-lysyl-[protein] + 3 S-adenosyl-L-methionine = N(6),N(6),N(6)-trimethyl-L-lysyl-[protein] + 3 S-adenosyl-L-homocysteine + 3 H(+). Functionally, methylates ribosomal protein L11. The protein is Ribosomal protein L11 methyltransferase of Pseudomonas putida (strain ATCC 47054 / DSM 6125 / CFBP 8728 / NCIMB 11950 / KT2440).